The chain runs to 1027 residues: Fibril-forming collagen alpha chain (1027 aa).

The interval tyrosine 1–valine 12 is nonhelical region (N-terminal). The segment at tyrosine 1 to alanine 1027 is disordered. The triple-helical region stretch occupies residues glycine 13 to serine 1023. Residues proline 17 to serine 26 show a composition bias toward pro residues. 4-hydroxyproline; partial is present on residues proline 21 and proline 24. 2 positions are modified to 4-hydroxyproline: proline 27 and proline 39. Proline 53 carries the 3-hydroxyproline; partial modification. Residue proline 54 is modified to 4-hydroxyproline. The span at serine 63–proline 72 shows a compositional bias: basic and acidic residues. Position 72 is a 4-hydroxyproline; partial (proline 72). The segment covering glycine 73–glycine 91 has biased composition (gly residues). Residues proline 90 and proline 93 each carry the 4-hydroxyproline modification. Lysine 96 and lysine 108 each carry 5-hydroxylysine. 2 O-linked (Gal...) hydroxylysine glycosylation sites follow: lysine 96 and lysine 108. 4-hydroxyproline; partial occurs at positions 123 and 128. 4-hydroxyproline is present on proline 150. At proline 161 the chain carries 3-hydroxyproline; partial. The residue at position 162 (proline 162) is a 4-hydroxyproline. 3-hydroxyproline; partial is present on proline 164. Residues proline 165, proline 174, proline 177, and proline 180 each carry the 4-hydroxyproline modification. Residues isoleucine 168–serine 182 show a composition bias toward low complexity. 5-hydroxylysine occurs at positions 183 and 192. O-linked (Gal...) hydroxylysine glycosylation occurs at lysine 192. 4-hydroxyproline occurs at positions 207, 216, 219, 228, and 237. Positions glutamate 227 to proline 249 are enriched in low complexity. Residue proline 243 is modified to 4-hydroxyproline; partial. 4-hydroxyproline occurs at positions 249 and 255. Residues glycine 259–glycine 268 show a composition bias toward gly residues. Lysine 261 carries the post-translational modification 5-hydroxylysine. A glycan (O-linked (Gal...) hydroxylysine) is linked at lysine 261. 2 positions are modified to 4-hydroxyproline; partial: proline 273 and proline 276. Lysine 279 is subject to 5-hydroxylysine. Lysine 279 carries O-linked (Gal...) hydroxylysine glycosylation. 4-hydroxyproline; partial occurs at positions 285, 291, and 303. Residues proline 306, proline 312, proline 321, proline 327, and proline 339 each carry the 4-hydroxyproline modification. Lysine 342 carries the 5-hydroxylysine modification. Proline 348 bears the 4-hydroxyproline; partial mark. At lysine 351 the chain carries 5-hydroxylysine; partial. 4-hydroxyproline is present on residues proline 366, proline 372, and proline 375. A compositionally biased stretch (basic and acidic residues) spans arginine 380–glutamine 396. A 4-hydroxyproline; partial modification is found at proline 381. Proline 387 carries the 4-hydroxyproline modification. Low complexity predominate over residues glutamate 398 to arginine 420. Residue proline 416 is modified to 3-hydroxyproline; partial. Proline 417, proline 423, proline 429, and proline 432 each carry 4-hydroxyproline. A compositionally biased stretch (basic and acidic residues) spans glutamate 437–glutamate 446. Low complexity predominate over residues threonine 447–glutamine 480. A 4-hydroxyproline mark is found at proline 453, proline 465, and proline 483. 3 positions are modified to 4-hydroxyproline; partial: proline 500, proline 503, and proline 506. Residues glycine 502–glycine 511 show a composition bias toward gly residues. Residues proline 513 and proline 525 each carry the 4-hydroxyproline modification. Positions glutamate 527 to alanine 543 are enriched in low complexity. 4-hydroxyproline; partial is present on residues proline 533 and proline 536. 4-hydroxyproline is present on proline 540. Lysine 546 bears the 5-hydroxylysine mark. Proline 551 carries the 3-hydroxyproline; partial modification. 4-hydroxyproline is present on residues proline 552 and proline 561. 5-hydroxylysine occurs at positions 567 and 573. O-linked (Gal...) hydroxylysine glycosylation is present at lysine 573. The span at serine 575–glutamate 599 shows a compositional bias: basic and acidic residues. A 4-hydroxyproline modification is found at proline 603. Lysine 612 bears the 5-hydroxylysine mark. Residue lysine 612 is glycosylated (O-linked (Gal...) hydroxylysine). Residue proline 621 is modified to 4-hydroxyproline; partial. A 4-hydroxyproline modification is found at proline 627. Residues proline 635 to glutamine 644 show a composition bias toward low complexity. Proline 645 is subject to 4-hydroxyproline; partial. Proline 647 carries the post-translational modification 3-hydroxyproline; partial. 4-hydroxyproline is present on proline 648. Position 657 is a 5-hydroxylysine (lysine 657). O-linked (Gal...) hydroxylysine glycosylation is present at lysine 657. 6 positions are modified to 4-hydroxyproline: proline 663, proline 708, proline 711, proline 714, proline 717, and proline 723. The segment covering glutamate 698 to serine 710 has biased composition (low complexity). Pro residues predominate over residues proline 714–serine 726. Lysine 738 is modified (5-hydroxylysine). Residue lysine 738 is glycosylated (O-linked (Gal...) hydroxylysine). Proline 744 and proline 759 each carry 4-hydroxyproline. The segment covering glutamine 750 to aspartate 771 has biased composition (basic and acidic residues). A 5-hydroxylysine modification is found at lysine 765. O-linked (Gal...) hydroxylysine glycosylation is present at lysine 765. Proline 773 carries the post-translational modification 3-hydroxyproline; partial. A 4-hydroxyproline mark is found at proline 774, proline 783, and proline 792. Residues glycine 802–glycine 814 show a composition bias toward gly residues. 5-hydroxylysine is present on lysine 810. O-linked (Gal...) hydroxylysine glycosylation is present at lysine 810. 3-hydroxyproline; partial is present on proline 815. 4-hydroxyproline occurs at positions 816, 843, 849, 855, 861, 867, 888, 894, 903, and 915. Over residues alanine 828–alanine 848 the composition is skewed to low complexity. The span at glutamine 884–proline 894 shows a compositional bias: low complexity. The span at proline 911–lysine 927 shows a compositional bias: low complexity. Lysine 927 is modified (5-hydroxylysine). Lysine 927 carries O-linked (Gal...) hydroxylysine glycosylation. The residue at position 933 (lysine 933) is a 5-hydroxylysine; partial. A 5-hydroxylysine mark is found at lysine 936 and lysine 939. O-linked (Gal...) hydroxylysine glycosylation is present at lysine 936. A compositionally biased stretch (low complexity) spans threonine 942–proline 962. At proline 945 the chain carries 4-hydroxyproline. Proline 954 carries the post-translational modification 4-hydroxyproline; partial. 2 positions are modified to 4-hydroxyproline: proline 963 and proline 966. The segment covering glycine 973–glycine 982 has biased composition (gly residues). The segment covering proline 983–proline 1001 has biased composition (low complexity). 4-hydroxyproline is present on residues proline 984 and proline 990. Proline 1010 is modified (3-hydroxyproline; partial). The segment covering proline 1010 to proline 1020 has biased composition (pro residues). 4-hydroxyproline is present on proline 1011. Position 1013 is a 3-hydroxyproline; partial (proline 1013). Proline 1014 bears the 4-hydroxyproline mark. Proline 1016 bears the 3-hydroxyproline; partial mark. Proline 1017 bears the 4-hydroxyproline mark. Proline 1019 carries the 3-hydroxyproline; partial modification. Proline 1020 is subject to 4-hydroxyproline. Positions aspartate 1024–alanine 1027 are nonhelical region (C-terminal).

As to quaternary structure, homotetramer.

The protein resides in the secreted. The protein localises to the extracellular space. Its subcellular location is the extracellular matrix. Its function is as follows. Fibril-forming collagen. The sequence is that of Fibril-forming collagen alpha chain from Riftia pachyptila (Vent tube worm).